A 74-amino-acid chain; its full sequence is Small ribosomal subunit protein bS18 (74 aa).

This sequence belongs to the bacterial ribosomal protein bS18 family. In terms of assembly, part of the 30S ribosomal subunit. Forms a tight heterodimer with protein bS6.

Binds as a heterodimer with protein bS6 to the central domain of the 16S rRNA, where it helps stabilize the platform of the 30S subunit. This is Small ribosomal subunit protein bS18 from Rhizorhabdus wittichii (strain DSM 6014 / CCUG 31198 / JCM 15750 / NBRC 105917 / EY 4224 / RW1) (Sphingomonas wittichii).